The chain runs to 759 residues: uncharacterized protein (759 aa).

Disordered regions lie at residues 269–328 (SQRV…GEEP) and 406–759 (LPLR…AQTA). The segment covering 289-299 (AGGKEEAERGG) has biased composition (basic and acidic residues). The segment covering 406 to 415 (LPLRPPSGSG) has biased composition (low complexity). Residues 417–430 (AARKPGYEKEEGRG) show a composition bias toward basic and acidic residues. Residues 431–444 (RATTASATAATSPR) show a composition bias toward low complexity. Composition is skewed to basic and acidic residues over residues 469–518 (PESE…RGEH) and 525–545 (DSGR…EKGT). Over residues 585–599 (WVPPPHLLFPSPLPS) the composition is skewed to pro residues. Residues 659–680 (SLSSLSSSSSSSSSSSPSYSPS) are compositionally biased toward low complexity. Positions 681–690 (PLSPPSPVSP) are enriched in pro residues. Composition is skewed to low complexity over residues 691 to 704 (SSPR…IRSP) and 728 to 746 (PPFS…PSAP).

This is an uncharacterized protein from Human herpesvirus 6B (strain Z29) (HHV-6 variant B).